The sequence spans 836 residues: TATA box-binding protein-associated factor RNA polymerase I subunit C (836 aa).

Disordered stretches follow at residues 662 to 683 and 703 to 836; these read GDLS…QQDE and HRGE…RMGF. A compositionally biased stretch (polar residues) spans 738-754; it reads DASSAPRSQDLSTSEAR. A compositionally biased stretch (basic and acidic residues) spans 780–796; the sequence is RQTLRDHTDKLPLKRDT. T802 is modified (phosphothreonine). Positions 803–828 are enriched in polar residues; that stretch reads PPSQASSLQTMSFRQQTPVHSGSQPP.

In terms of assembly, component of the transcription factor SL1/TIF-IB complex, composed of TBP and at least TAF1A, TAF1B, TAF1C and TAF1D. In the complex interacts directly with TBP, TAF1A and TAF1B. Interaction of the SL1/TIF-IB subunits with TBP excludes interaction of TBP with the transcription factor IID (TFIID) subunits. Interacts with MYC and RRN3. Interacts with p53/TP53; the interaction prevents the association of SL1/TIF-IB with UBTF and represses RNA polymerase I transcription. Part of Pol I pre-initiation complex (PIC), in which Pol I core assembles with RRN3 and promoter-bound UTBF and SL1/TIF-IB complex.

The protein resides in the nucleus. Its subcellular location is the nucleolus. In terms of biological role, component of the transcription factor SL1/TIF-IB complex, which is involved in the assembly of the PIC (pre-initiation complex) during RNA polymerase I-dependent transcription. The rate of PIC formation probably is primarily dependent on the rate of association of SL1/TIF-IB with the rDNA promoter. SL1/TIF-IB is involved in stabilization of nucleolar transcription factor 1/UBTF on rDNA. Formation of SL1/TIF-IB excludes the association of TBP with TFIID subunits. Recruits RNA polymerase I to the rRNA gene promoter via interaction with RRN3. This is TATA box-binding protein-associated factor RNA polymerase I subunit C (Taf1c) from Mus musculus (Mouse).